The primary structure comprises 420 residues: LanC-like protein 3 homolog (420 aa).

It belongs to the LanC-like protein family.

This is LanC-like protein 3 homolog from Drosophila pseudoobscura pseudoobscura (Fruit fly).